The primary structure comprises 93 residues: Pyrimidine/purine nucleoside phosphorylase (93 aa).

Belongs to the nucleoside phosphorylase PpnP family.

The enzyme catalyses a purine D-ribonucleoside + phosphate = a purine nucleobase + alpha-D-ribose 1-phosphate. It catalyses the reaction adenosine + phosphate = alpha-D-ribose 1-phosphate + adenine. The catalysed reaction is cytidine + phosphate = cytosine + alpha-D-ribose 1-phosphate. It carries out the reaction guanosine + phosphate = alpha-D-ribose 1-phosphate + guanine. The enzyme catalyses inosine + phosphate = alpha-D-ribose 1-phosphate + hypoxanthine. It catalyses the reaction thymidine + phosphate = 2-deoxy-alpha-D-ribose 1-phosphate + thymine. The catalysed reaction is uridine + phosphate = alpha-D-ribose 1-phosphate + uracil. It carries out the reaction xanthosine + phosphate = alpha-D-ribose 1-phosphate + xanthine. In terms of biological role, catalyzes the phosphorolysis of diverse nucleosides, yielding D-ribose 1-phosphate and the respective free bases. Can use uridine, adenosine, guanosine, cytidine, thymidine, inosine and xanthosine as substrates. Also catalyzes the reverse reactions. The polypeptide is Pyrimidine/purine nucleoside phosphorylase (Pseudoalteromonas atlantica (strain T6c / ATCC BAA-1087)).